Consider the following 445-residue polypeptide: Tubulin beta-4B chain (445 aa).

Residues Met-1–Ile-4 carry the MREI motif motif. GTP is bound at residue Gln-11. A Phosphothreonine modification is found at Thr-55. An N6-acetyllysine modification is found at Lys-58. 5 residues coordinate GTP: Glu-69, Ser-138, Gly-142, Thr-143, and Gly-144. Mg(2+) is bound at residue Glu-69. At Ser-172 the chain carries Phosphoserine; by CDK1. The GTP site is built by Asn-204 and Asn-226. The disordered stretch occupies residues Gln-426–Ala-445. Over residues Thr-429 to Ala-445 the composition is skewed to acidic residues. Glu-438 bears the 5-glutamyl polyglutamate mark.

Belongs to the tubulin family. Dimer of alpha and beta chains. A typical microtubule is a hollow water-filled tube with an outer diameter of 25 nm and an inner diameter of 15 nM. Alpha-beta heterodimers associate head-to-tail to form protofilaments running lengthwise along the microtubule wall with the beta-tubulin subunit facing the microtubule plus end conferring a structural polarity. Microtubules usually have 13 protofilaments but different protofilament numbers can be found in some organisms and specialized cells. Component of sperm flagellar doublet microtubules. Requires Mg(2+) as cofactor. In terms of processing, some glutamate residues at the C-terminus are polyglycylated, resulting in polyglycine chains on the gamma-carboxyl group. Glycylation is mainly limited to tubulin incorporated into axonemes (cilia and flagella) whereas glutamylation is prevalent in neuronal cells, centrioles, axonemes, and the mitotic spindle. Both modifications can coexist on the same protein on adjacent residues, and lowering polyglycylation levels increases polyglutamylation, and reciprocally. Cilia and flagella glycylation is required for their stability and maintenance. Flagella glycylation controls sperm motility. Post-translationally, some glutamate residues at the C-terminus are polyglutamylated, resulting in polyglutamate chains on the gamma-carboxyl group. Polyglutamylation plays a key role in microtubule severing by spastin (SPAST). SPAST preferentially recognizes and acts on microtubules decorated with short polyglutamate tails: severing activity by SPAST increases as the number of glutamates per tubulin rises from one to eight, but decreases beyond this glutamylation threshold. Glutamylation is also involved in cilia motility. Phosphorylated on Ser-172 by CDK1 during the cell cycle, from metaphase to telophase, but not in interphase. This phosphorylation inhibits tubulin incorporation into microtubules.

The protein localises to the cytoplasm. It is found in the cytoskeleton. Its subcellular location is the flagellum axoneme. Its function is as follows. Tubulin is the major constituent of microtubules, a cylinder consisting of laterally associated linear protofilaments composed of alpha- and beta-tubulin heterodimers. Microtubules grow by the addition of GTP-tubulin dimers to the microtubule end, where a stabilizing cap forms. Below the cap, tubulin dimers are in GDP-bound state, owing to GTPase activity of alpha-tubulin. The polypeptide is Tubulin beta-4B chain (Tubb4b) (Rattus norvegicus (Rat)).